Reading from the N-terminus, the 339-residue chain is 7,8-didemethyl-8-hydroxy-5-deazariboflavin synthase (339 aa).

Positions 13 to 258 (ITYSKNIFIP…RDTDVSIQVP (246 aa)) constitute a Radical SAM core domain. [4Fe-4S] cluster is bound by residues Cys-27, Cys-31, and Cys-34.

Belongs to the radical SAM superfamily. CofG family. Consists of two subunits, CofG and CofH. [4Fe-4S] cluster serves as cofactor.

It carries out the reaction 5-amino-5-(4-hydroxybenzyl)-6-(D-ribitylimino)-5,6-dihydrouracil + S-adenosyl-L-methionine = 7,8-didemethyl-8-hydroxy-5-deazariboflavin + 5'-deoxyadenosine + L-methionine + NH4(+) + H(+). The protein operates within cofactor biosynthesis; coenzyme F0 biosynthesis. Functionally, catalyzes the radical-mediated synthesis of 7,8-didemethyl-8-hydroxy-5-deazariboflavin from 5-amino-5-(4-hydroxybenzyl)-6-(D-ribitylimino)-5,6-dihydrouracil. This is 7,8-didemethyl-8-hydroxy-5-deazariboflavin synthase from Methanobrevibacter smithii (strain ATCC 35061 / DSM 861 / OCM 144 / PS).